We begin with the raw amino-acid sequence, 394 residues long: NAD(P)H-quinone oxidoreductase subunit H (394 aa).

It belongs to the complex I 49 kDa subunit family. In terms of assembly, NDH-1 can be composed of about 15 different subunits; different subcomplexes with different compositions have been identified which probably have different functions.

The protein localises to the cellular thylakoid membrane. The enzyme catalyses a plastoquinone + NADH + (n+1) H(+)(in) = a plastoquinol + NAD(+) + n H(+)(out). It carries out the reaction a plastoquinone + NADPH + (n+1) H(+)(in) = a plastoquinol + NADP(+) + n H(+)(out). NDH-1 shuttles electrons from an unknown electron donor, via FMN and iron-sulfur (Fe-S) centers, to quinones in the respiratory and/or the photosynthetic chain. The immediate electron acceptor for the enzyme in this species is believed to be plastoquinone. Couples the redox reaction to proton translocation, and thus conserves the redox energy in a proton gradient. Cyanobacterial NDH-1 also plays a role in inorganic carbon-concentration. The sequence is that of NAD(P)H-quinone oxidoreductase subunit H from Prochlorococcus marinus (strain NATL1A).